Consider the following 509-residue polypeptide: Bifunctional purine biosynthesis protein PurH (509 aa).

Residues 1–144 enclose the MGS-like domain; sequence MKRALISVSD…KNYAAVTVVV (144 aa).

This sequence belongs to the PurH family.

The catalysed reaction is (6R)-10-formyltetrahydrofolate + 5-amino-1-(5-phospho-beta-D-ribosyl)imidazole-4-carboxamide = 5-formamido-1-(5-phospho-D-ribosyl)imidazole-4-carboxamide + (6S)-5,6,7,8-tetrahydrofolate. It carries out the reaction IMP + H2O = 5-formamido-1-(5-phospho-D-ribosyl)imidazole-4-carboxamide. Its pathway is purine metabolism; IMP biosynthesis via de novo pathway; 5-formamido-1-(5-phospho-D-ribosyl)imidazole-4-carboxamide from 5-amino-1-(5-phospho-D-ribosyl)imidazole-4-carboxamide (10-formyl THF route): step 1/1. It functions in the pathway purine metabolism; IMP biosynthesis via de novo pathway; IMP from 5-formamido-1-(5-phospho-D-ribosyl)imidazole-4-carboxamide: step 1/1. This chain is Bifunctional purine biosynthesis protein PurH, found in Listeria welshimeri serovar 6b (strain ATCC 35897 / DSM 20650 / CCUG 15529 / CIP 8149 / NCTC 11857 / SLCC 5334 / V8).